The chain runs to 568 residues: 4-hydroxy-7-methoxy-3-oxo-3,4-dihydro-2H-1,4-benzoxazin-2-yl glucoside beta-D-glucosidase, chloroplastic (568 aa).

The transit peptide at 1 to 50 directs the protein to the chloroplast; sequence MALLVGGTLNPTTHLSLRSRAGRNSENVWLRSAASSQTSKGRFCNLTVRA. Residues Gln-92, His-194, and 239–240 each bind a beta-D-glucoside; that span reads NE. Glu-240 acts as the Proton donor in catalysis. A disulfide bond links Cys-259 and Cys-265. A beta-D-glucoside contacts are provided by residues Tyr-383, Glu-456, Trp-504, 511–512, and Phe-520; that span reads EW. Glu-456 functions as the Nucleophile in the catalytic mechanism.

Belongs to the glycosyl hydrolase 1 family. As to quaternary structure, homohexamer. In terms of tissue distribution, expressed in seedlings, mesocotyl, coleoptile, leaf sheath, and roots.

It is found in the plastid. The protein resides in the chloroplast. The enzyme catalyses DIMBOA beta-D-glucoside + H2O = DIMBOA + D-glucose. The catalysed reaction is DIBOA beta-D-glucoside + H2O = DIBOA + D-glucose. It catalyses the reaction Hydrolysis of terminal, non-reducing beta-D-glucosyl residues with release of beta-D-glucose.. Inhibited by castanospermine, Ag(+) and Cu(2+). 34% inhibition by Zn(2+) and not affected by EDTA. Functionally, involved in defense of young plant parts against pests via the production of benzoxazolinones (hydroxamic acids) from hydroxamic acid glucosides. The preferred substrate is DIBOA-beta-D-glucoside. Can also use esculin and genistein glucoside as substrates, but no activity with salicin, p-nitrophenyl-alpha-glucoside or substrates related to cell wall components. This is 4-hydroxy-7-methoxy-3-oxo-3,4-dihydro-2H-1,4-benzoxazin-2-yl glucoside beta-D-glucosidase, chloroplastic from Secale cereale (Rye).